A 232-amino-acid chain; its full sequence is Cytidylate kinase (232 aa).

10–18 (GPAASGKST) provides a ligand contact to ATP.

The protein belongs to the cytidylate kinase family. Type 1 subfamily.

The protein localises to the cytoplasm. It carries out the reaction CMP + ATP = CDP + ADP. The enzyme catalyses dCMP + ATP = dCDP + ADP. The chain is Cytidylate kinase from Phytoplasma mali (strain AT).